Consider the following 1683-residue polypeptide: MGGVGQCQWPVWQVDDLTPCFQHDYLRILLPAVVIGLSVLNLGFRSARHAASRSKSPSTHAYAPVSNGDNSRPGAHRTDISPDDDAIAQDDEDDDEGLAIGGGRLALVKTATKGSIVQADTPPAQTLSVVVEELAIAGLVAVYVIALLSPKAHGSYTLTGTIIGLTTWVYVLVLATLRLFLGNTQWRVPHLWNHTAAIYSCQWLFLIGIFRSAMVHPSSKLAQILVIVEFALTSLLFFMAITTRKGNKTVLLEWEDGIPPARENLASLFSSFTFSWVDQIVWQGYKEPFEMGKVWNLLPKDKAATVLSHYRRVKKTTKLYWHLLRYFKGDLLSQAGWAVMSGMFTFAPTMLLKAILEYVEEPESAPRSVVWLYVILLPVTDIIRSLGDNRALWIGRKICINVRAILVGEIYAKALRRKAATGKDTVLGSEKKEDKPKGGFISKIKKMLCLGDNDESEDGKDGDKDKEDSSDEQANHGTIINLMSVDSFNVSEVTSYLHFLFASAPTQLLVSVVLLYQVLGMSAIPGFVVMVLLLPVNIGFGRAFNSTQKKIMACSDKRIHSTNEVLQNIRIIKYFAWEHRFSESVDEKRKAELKALRARYMVWACAVAVWNTVPLLITFFSFLMYTTVEKRPLHPSIAFTSISLFMLLRHPLDQLGDMLAHVQEAKVSIDRIEEFLSEEETDKFIQLGEDNVNEEGTRIIALKDAAFIWGGKDIIAADGSQAFRLLDIDTEFMIGKLNVIAGPTGSGKTSLLMALLGEMTLLKGRVYLPGGRSREDVRPDPETGLAETCAYVAQQAWLVNANIKDNILFSARFDEKRYRDVIVACALERDLEILDNGDETLVGEKGITLSGGQKQRISLARAVYSNSKHLLLDDCLSAVDSHTAQWIFNNCIRGPLMKDRTCIMVTHNIPLCVPHSDFVVVMDNGRITHQGRALEVITSGALGEEIAQKAKSETPNISRIPSRVPSSVGEGSGNTLLDTDGDDHLSKPKNAKKAKKAEAMEETKATGAVKWPVMKLYLASMGSWWFWVVAGCIFISQQASDVVSNLWIKQWASQYTTEVSSVPISTSSHMYGTQSFAPTYMVPVQTYVKDQLARNGNATALDIVVNSEVNAQYYLVVLAIIGLAGSLTAFLRDLWIFFGSLTASAKIHTRLLNTVTRAKFRFFDVTPLGQMMNRFSKDMEAVDQEVAPIAIGILSCALGITVTVVLIASITPGFLIAAVFITIAYVLLAKFYLASSRDLKRLESVQRSPLFQQFGETLSGVTTIRAYGDERRFVRDNLTRINGQLRPMIYLWATNRWLAFRTDLLGDFVSFFAGVFVILSIGVIDAGWAGISLSYAIGFAENILWLVRLYSINEQNMNAVERIKEYLEVEQEAAPICEKNRPPQNWPAQGSVEFINYTTSYRKELDPVLRNVTFKISPQEKVGIVGRTGAGKSSLALAIFRALEADGGKILIDGIDIGLIGLRDLREAITIVPQEPTLFTGTIRSNLDPFHLFTDEQIYKSLQRVQLIGPDETIPTADASPVLPASPTTPGGASNKNIFLNLSSKVSESGSNLSQGQRQLLCLARALLKEPRVLVMDEATASIDYATDSKIQDTIREMKDTTIITIAHRLQTIADYDKVLVLDKGEVVEYAHPWELMRKGEGGSFKSMCDMSGDTELLAKAAKKAFDAKKLIDVDDEAADAAP.

A helical membrane pass occupies residues 24–44; sequence DYLRILLPAVVIGLSVLNLGF. The tract at residues 53 to 93 is disordered; it reads RSKSPSTHAYAPVSNGDNSRPGAHRTDISPDDDAIAQDDED. Residues 81–93 are compositionally biased toward acidic residues; the sequence is SPDDDAIAQDDED. The next 4 helical transmembrane spans lie at 127–147, 157–177, 190–210, and 221–241; these read LSVV…VIAL, TLTG…LATL, HLWN…IGIF, and LAQI…FMAI. Residue Asn-247 is glycosylated (N-linked (GlcNAc...) asparagine). 2 helical membrane-spanning segments follow: residues 336–356 and 368–388; these read GWAV…KAIL and SVVW…SLGD. In terms of domain architecture, ABC transmembrane type-1 1 spans 338 to 664; sequence AVMSGMFTFA…LGDMLAHVQE (327 aa). Residues 451-473 form a disordered region; that stretch reads GDNDESEDGKDGDKDKEDSSDEQ. The N-linked (GlcNAc...) asparagine glycan is linked to Asn-489. The next 2 membrane-spanning stretches (helical) occupy residues 496-516 and 518-538; these read YLHF…VLLY and VLGM…PVNI. Residue Asn-545 is glycosylated (N-linked (GlcNAc...) asparagine). 2 helical membrane-spanning segments follow: residues 602–622 and 632–648; these read VWAC…FFSF and PLHP…FMLL. Residues 700-949 enclose the ABC transporter 1 domain; the sequence is IALKDAAFIW…GALGEEIAQK (250 aa). 742–749 contacts ATP; the sequence is GPTGSGKT. Positions 952 to 998 are disordered; that stretch reads SETPNISRIPSRVPSSVGEGSGNTLLDTDGDDHLSKPKNAKKAKKAE. Asn-956 carries N-linked (GlcNAc...) asparagine glycosylation. The helical transmembrane segment at 1016–1036 threads the bilayer; sequence LYLASMGSWWFWVVAGCIFIS. The region spanning 1028 to 1351 is the ABC transmembrane type-1 2 domain; sequence VVAGCIFISQ…NILWLVRLYS (324 aa). An N-linked (GlcNAc...) asparagine glycan is attached at Asn-1097. Helical transmembrane passes span 1111–1131, 1182–1202, and 1204–1224; these read AQYY…TAFL, VDQE…GITV, and VVLI…ITIA. A glycan (N-linked (GlcNAc...) asparagine) is linked at Asn-1277. The next 2 helical transmembrane spans lie at 1304-1324 and 1327-1347; these read LLGD…IGVI and GWAG…LWLV. Positions 1392–1649 constitute an ABC transporter 2 domain; sequence VEFINYTTSY…GEGGSFKSMC (258 aa). Asn-1396 and Asn-1411 each carry an N-linked (GlcNAc...) asparagine glycan. Residue 1426-1433 coordinates ATP; it reads GRTGAGKS. Asn-1541 and Asn-1552 each carry an N-linked (GlcNAc...) asparagine glycan.

This sequence belongs to the ABC transporter superfamily.

The protein resides in the membrane. Functionally, ABC transporter; part of the gene cluster that mediates the biosynthesis of pyriculol and pyriculariol, two heptaketides that induce lesion formation upon application on rice leaves but are dispensable for pathogenicity. With the MFS transporter MFS1, is most likely responsible for pyriculol and pyriculariol secretion and thereby may contribute to intrinsic resistance. This is ABC transporter 7 from Pyricularia oryzae (strain 70-15 / ATCC MYA-4617 / FGSC 8958) (Rice blast fungus).